A 596-amino-acid chain; its full sequence is Malto-oligosyltrehalose trehalohydrolase (596 aa).

263-268 contacts substrate; it reads RLDAVH. Catalysis depends on Asp-265, which acts as the Nucleophile. Catalysis depends on Glu-302, which acts as the Proton donor. Substrate-binding positions include 327 to 331 and 397 to 402; these read DDFHH and HDQIGN.

It belongs to the glycosyl hydrolase 13 family.

It localises to the cytoplasm. The enzyme catalyses hydrolysis of (1-&gt;4)-alpha-D-glucosidic linkage in 4-alpha-D-[(1-&gt;4)-alpha-D-glucanosyl]n trehalose to yield trehalose and (1-&gt;4)-alpha-D-glucan.. It participates in glycan biosynthesis; trehalose biosynthesis. The protein is Malto-oligosyltrehalose trehalohydrolase (treZ) of Rhizobium sp. (strain M-11).